Reading from the N-terminus, the 193-residue chain is NADH-quinone oxidoreductase subunit B (193 aa).

Residues cysteine 72, cysteine 73, cysteine 137, and cysteine 167 each coordinate [4Fe-4S] cluster.

The protein belongs to the complex I 20 kDa subunit family. As to quaternary structure, NDH-1 is composed of 14 different subunits. Subunits NuoB, C, D, E, F, and G constitute the peripheral sector of the complex. [4Fe-4S] cluster is required as a cofactor.

It localises to the cell inner membrane. It carries out the reaction a quinone + NADH + 5 H(+)(in) = a quinol + NAD(+) + 4 H(+)(out). Functionally, NDH-1 shuttles electrons from NADH, via FMN and iron-sulfur (Fe-S) centers, to quinones in the respiratory chain. The immediate electron acceptor for the enzyme in this species is believed to be ubiquinone. Couples the redox reaction to proton translocation (for every two electrons transferred, four hydrogen ions are translocated across the cytoplasmic membrane), and thus conserves the redox energy in a proton gradient. This chain is NADH-quinone oxidoreductase subunit B, found in Bartonella henselae (strain ATCC 49882 / DSM 28221 / CCUG 30454 / Houston 1) (Rochalimaea henselae).